The sequence spans 344 residues: Tripartite motif-containing protein 44 (344 aa).

Disordered stretches follow at residues 1–25 and 68–165; these read MASG…EPDE and TPPA…EFDP. The span at 75 to 92 shows a compositional bias: basic and acidic residues; that stretch reads GAGKEEAEVKVEQEREIE. The span at 93 to 165 shows a compositional bias: acidic residues; sequence SEAGEESESE…ETEAESEFDP (73 aa). The B box-type zinc finger occupies 174-215; it reads VAKRKCPDHGLDLSTYCQEDRQLICVLCPVIGAHQGHQLSTL. Zn(2+) contacts are provided by Cys-179, His-182, Cys-201, and His-207. The stretch at 290–325 forms a coiled coil; sequence AHVTEILADIQSHMDRLMTQMAQAKEQLDTSNESAE. The tract at residues 309-344 is disordered; the sequence is QMAQAKEQLDTSNESAEPKAEGDEEGPSGASEEEDT. Acidic residues predominate over residues 330–344; sequence GDEEGPSGASEEEDT. Residues Ser-336 and Ser-339 each carry the phosphoserine modification.

Interacts (via coiled coil) with TRIM17 (via coiled coil).

May play a role in the process of differentiation and maturation of neuronal cells. May regulate the activity of TRIM17. Is a negative regulator of PAX6 expression. The polypeptide is Tripartite motif-containing protein 44 (TRIM44) (Pongo abelii (Sumatran orangutan)).